A 603-amino-acid chain; its full sequence is Protein SHORT-ROOT 2 (603 aa).

Disordered stretches follow at residues 11 to 58 (HHHH…HSHS) and 106 to 140 (DFSS…SSAG). Over residues 31-44 (SYPSSRGSTSSPSS) the composition is skewed to low complexity. Basic residues predominate over residues 45–58 (HHTHNHTYYHHSHS). Positions 108 to 125 (SSSSSSRQFHSGTGAPSS) are enriched in low complexity. Positions 179-602 (AAPSSSGRWA…QPVVWASAWK (424 aa)) constitute a GRAS domain. Residues 186–249 (RWAAQLLMEC…LTTSGPRTLR (64 aa)) form a leucine repeat I (LRI) region. Residues 268–354 (ALKFQELSPW…DTPHLSITTV (87 aa)) form a VHIID region. Positions 318-322 (LHILD) match the VHIID motif. The segment at 370–406 (EIGQRLEKFARLMGVPFSFRAVHHSGDLADLDLAALD) is leucine repeat II (LRII). The PFYRE stretch occupies residues 416–514 (LAVNCVNALR…ERAVGRAIVD (99 aa)). Positions 517–602 (SCPASQSAER…QPVVWASAWK (86 aa)) are SAW.

Belongs to the GRAS family. As to quaternary structure, does not interact with SCR1.

It localises to the nucleus. In terms of biological role, putative transcription factor involved in asymmetric cell division. This is Protein SHORT-ROOT 2 (SHR2) from Oryza sativa subsp. japonica (Rice).